The sequence spans 683 residues: MDNYTLALNCNHTTHGYAHYVYSTLSYLVFIGNAPGYPNCENCIYDITFNSTSMLNISNNYFHIANATLGAPEYPEQPVTLSVIGEESPWVAWLAVHTPDKNYTEDANTARAVMRVLDPFNISWCAVYNVQSVDPTDTQDISNCTEVSEELPVNNQKSSIHLNTYFLNSTFTVSVSLNASNISSQCSGNVSLENMTSNVHIPCPTLPLTVSVKASTDNMQTGAAVNASIDIGWLLQNLTDASLTVSSSPGNLTQKNCTTYKNISKTDRHVRDENLYVLAQIPALEGHKDSFTLTRSPILLNFSRNSSEFQLVLYDRNSSCVWANPANGTDTILVSMSCPHITATISPRGEIKVNVTGNFSRNANLSLAFLSSKGKEYAGVLLQAFEPSTRPPPGTVAPGILSTTANFETSTNKSSPTYTPTPAKLSTPPGLTNTLLLTAGEHNSGIGSTLEPLTTVSVQVLQTPSSPTRDTSTLVIKLTTVPQDHKTVSPSLVTPGRTSTLPIVSMTHFSREGSSPKPQTTAAKTSSEASLPPLLTTTPTPTNTEKSQSTFASSTVSVDTTFTGDDVNTVGTMSPSITQTLPITPTSGRQYIVVGCCTLNRRSGNLFFFFLFVAAHRESGHNTSMPNPHHNSVKPEDHPHHPEGDHPDADHHERFQIWLLPIAGTIFALVALVIVNIALRMTE.

Polar residues-rich tracts occupy residues 407–420 and 512–529; these read FETS…TYTP and EGSS…SSEA. 3 disordered regions span residues 407-427, 509-556, and 621-648; these read FETS…KLST, FSRE…SSTV, and HNTS…DHPD. Over residues 531-542 the composition is skewed to low complexity; that stretch reads LPPLLTTTPTPT. Composition is skewed to polar residues over residues 543–556 and 621–630; these read NTEK…SSTV and HNTSMPNPHH. A compositionally biased stretch (basic and acidic residues) spans 633–648; the sequence is VKPEDHPHHPEGDHPD. The helical transmembrane segment at 657 to 677 threads the bilayer; that stretch reads IWLLPIAGTIFALVALVIVNI.

The protein localises to the host membrane. This is an uncharacterized protein from Alcelaphine herpesvirus 1 (strain C500) (AlHV-1).